Here is a 278-residue protein sequence, read N- to C-terminus: Small ribosomal subunit biogenesis GTPase RsgA (278 aa).

The region spanning 62-218 (KNELTRPRVA…ICDTPGFNVI (157 aa)) is the CP-type G domain. GTP is bound by residues 112-115 (TKTD) and 162-170 (GQSGVGKSS). Residues Cys-241, Cys-246, His-248, and Cys-254 each contribute to the Zn(2+) site.

The protein belongs to the TRAFAC class YlqF/YawG GTPase family. RsgA subfamily. Monomer. Associates with 30S ribosomal subunit, binds 16S rRNA. Requires Zn(2+) as cofactor.

Its subcellular location is the cytoplasm. Functionally, one of several proteins that assist in the late maturation steps of the functional core of the 30S ribosomal subunit. Helps release RbfA from mature subunits. May play a role in the assembly of ribosomal proteins into the subunit. Circularly permuted GTPase that catalyzes slow GTP hydrolysis, GTPase activity is stimulated by the 30S ribosomal subunit. The chain is Small ribosomal subunit biogenesis GTPase RsgA from Mycoplasma genitalium (strain ATCC 33530 / DSM 19775 / NCTC 10195 / G37) (Mycoplasmoides genitalium).